The chain runs to 365 residues: Phosphoserine aminotransferase (365 aa).

Residue arginine 40 participates in L-glutamate binding. Residues 74 to 75 (AS), phenylalanine 99, threonine 155, aspartate 177, and glutamine 200 contribute to the pyridoxal 5'-phosphate site. Lysine 201 carries the post-translational modification N6-(pyridoxal phosphate)lysine. Residue 241-242 (NT) coordinates pyridoxal 5'-phosphate.

It belongs to the class-V pyridoxal-phosphate-dependent aminotransferase family. SerC subfamily. As to quaternary structure, homodimer. Pyridoxal 5'-phosphate is required as a cofactor.

The protein localises to the cytoplasm. The catalysed reaction is O-phospho-L-serine + 2-oxoglutarate = 3-phosphooxypyruvate + L-glutamate. It carries out the reaction 4-(phosphooxy)-L-threonine + 2-oxoglutarate = (R)-3-hydroxy-2-oxo-4-phosphooxybutanoate + L-glutamate. Its pathway is amino-acid biosynthesis; L-serine biosynthesis; L-serine from 3-phospho-D-glycerate: step 2/3. Functionally, catalyzes the reversible conversion of 3-phosphohydroxypyruvate to phosphoserine and of 3-hydroxy-2-oxo-4-phosphonooxybutanoate to phosphohydroxythreonine. The polypeptide is Phosphoserine aminotransferase (Lactococcus lactis subsp. cremoris (strain SK11)).